The primary structure comprises 103 residues: Thioredoxin-1 (103 aa).

In terms of domain architecture, Thioredoxin spans 2 to 103 (VTQFKTASEF…AIKQAIAANA (102 aa)). Residues cysteine 30 and cysteine 33 each act as nucleophile in the active site. A disulfide bridge links cysteine 30 with cysteine 33. Residues lysine 54, lysine 66, and lysine 96 each participate in a glycyl lysine isopeptide (Lys-Gly) (interchain with G-Cter in ubiquitin) cross-link.

The protein belongs to the thioredoxin family. Monomer. Part of the heterodimeric LMA1 complex together with the proteinase inhibitor PBI2. Most of the thioredoxin of yeast is in this complex rather than the well-studied monomer. LMA1 binds to the ATPase SEC18. Reversible disulfide bond formation between Cys-30 and Cys-33, reverted by thioredoxin reductase TRR1 using NADPH as hydrogen donor.

It localises to the nucleus. The protein localises to the cytoplasm. Its subcellular location is the golgi apparatus membrane. The protein resides in the mitochondrion intermembrane space. Participates as a hydrogen donor in redox reactions through the reversible oxidation of its active center dithiol to a disulfide, accompanied by the transfer of 2 electrons and 2 protons. It is involved in many cellular processes, including deoxyribonucleotide synthesis, repair of oxidatively damaged proteins, protein folding, sulfur metabolism, and redox homeostasis. Thioredoxin-dependent enzymes include phosphoadenosine-phosphosulfate reductase MET16, alkyl-hydroperoxide reductase DOT5, thioredoxin peroxidases TSA1 and TSA2, alkyl hydroperoxide reductase AHP1, and peroxiredoxin HYR1. Thioredoxin is also involved in protection against reducing stress. As part of the LMA1 complex, it is involved in the facilitation of vesicle fusion such as homotypic vacuole and ER-derived COPII vesicle fusion with the Golgi. This activity does not require the redox mechanism. This Saccharomyces cerevisiae (strain ATCC 204508 / S288c) (Baker's yeast) protein is Thioredoxin-1 (TRX1).